The following is a 225-amino-acid chain: LysM and putative peptidoglycan-binding domain-containing protein 1 (225 aa).

Residues Ser-23 and Ser-33 each carry the phosphoserine modification. The LysM domain occupies Leu-40–Ile-84. Residues Leu-97 to Ser-153 form a disordered region. The span at Asp-98–Glu-107 shows a compositional bias: acidic residues. Phosphoserine is present on Ser-99. Basic and acidic residues predominate over residues Ser-112–Ala-121. Phosphoserine occurs at positions 164, 179, 192, and 210. Residues Ala-170–Leu-225 form a disordered region. The segment covering Thr-214–Leu-225 has biased composition (basic and acidic residues).

The protein is LysM and putative peptidoglycan-binding domain-containing protein 1 (LYSMD1) of Bos taurus (Bovine).